Consider the following 321-residue polypeptide: Large ribosomal subunit protein uL10 (321 aa).

Residues 284–321 are disordered; it reads SAGTAPTGGGAAAAAVEEKKEEPEEESDDDIGFSLFDD. The span at 306–321 shows a compositional bias: acidic residues; sequence PEEESDDDIGFSLFDD.

It belongs to the universal ribosomal protein uL10 family. P0 forms a pentameric complex by interaction with dimers of P1 and P2. In terms of processing, phosphorylated.

Ribosomal protein P0 is the functional equivalent of E.coli protein L10. The polypeptide is Large ribosomal subunit protein uL10 (Oxybasis rubra (Red goosefoot)).